The primary structure comprises 258 residues: 5'-nucleotidase SurE (258 aa).

The a divalent metal cation site is built by Asp-9, Asp-10, Ser-40, and Asn-95.

The protein belongs to the SurE nucleotidase family. A divalent metal cation is required as a cofactor.

The protein localises to the cytoplasm. The catalysed reaction is a ribonucleoside 5'-phosphate + H2O = a ribonucleoside + phosphate. Its function is as follows. Nucleotidase that shows phosphatase activity on nucleoside 5'-monophosphates. The protein is 5'-nucleotidase SurE of Nitratiruptor sp. (strain SB155-2).